The primary structure comprises 208 residues: Probable acyl-homoserine-lactone synthase (208 aa).

It belongs to the autoinducer synthase family.

It carries out the reaction a fatty acyl-[ACP] + S-adenosyl-L-methionine = an N-acyl-L-homoserine lactone + S-methyl-5'-thioadenosine + holo-[ACP] + H(+). Functionally, required for the synthesis of OHHL (N-(3-oxooctanoyl)-L-homoserine lactone), an autoinducer molecule which binds to TraR and thus acts in the control of conjugal transfer. This chain is Probable acyl-homoserine-lactone synthase (traI), found in Sinorhizobium fredii (strain NBRC 101917 / NGR234).